Here is a 202-residue protein sequence, read N- to C-terminus: MSHIAVERNRRRQMNEHLKSLRSLTPCFYIKRGDQASIIGGVIEFIKELQQLVQVLESKKRRKTLNRPSFPYDHQTIEPSSLGAATTRVPFSRIENVMTTSTFKEVGACCNSPHANVEAKISGSNVVLRVVSRRIVGQLVKIISVLEKLSFQVLHLNISSMEETVLYFFVVKIGLECHLSLEELTLEVQKSFVSDEVIVSTN.

The bHLH domain occupies 1 to 49 (MSHIAVERNRRRQMNEHLKSLRSLTPCFYIKRGDQASIIGGVIEFIKEL).

As to quaternary structure, homodimer. Leaf epidermis and flowers.

It localises to the nucleus. Transcription factor. Together with FMA and SPCH, regulates the stomata formation. Required for the differentiation of stomatal guard cells, by promoting successive asymmetric cell divisions and the formation of guard mother cells. Promotes the conversion of the leaf epidermis into stomata. This chain is Transcription factor MUTE (MUTE), found in Arabidopsis thaliana (Mouse-ear cress).